Here is a 566-residue protein sequence, read N- to C-terminus: Type 2 DNA topoisomerase 6 subunit B (566 aa).

ATP is bound by residues Asn-48, Asp-80, 101-102 (TK), 111-118 (GQQGIGIS), and Lys-475.

It belongs to the TOP6B family. Homodimer. Heterotetramer of two Top6A and two Top6B chains.

It catalyses the reaction ATP-dependent breakage, passage and rejoining of double-stranded DNA.. In terms of biological role, relaxes both positive and negative superturns and exhibits a strong decatenase activity. In Thermococcus sibiricus (strain DSM 12597 / MM 739), this protein is Type 2 DNA topoisomerase 6 subunit B.